The chain runs to 541 residues: MEAPMKLEVKVENYVECGINEDEATPLREGTGETPPHAFACGVPMSGSGWCSDPEDGNLVHHSATPTSDEHLQPSLDTIEPKMEPKIKEDADNAMLDSLLADPFENNSPATLQTPADVKPNAMLDSVEQGSRSCELLPSEFSKRENLDDMDLFSLKAAKTLVPDEQQSFPQNDTPIDDPEAADLIAQKREILKMLEMTAENRKVKHKKKKHKKERSHRSNKHQEESRKRNHSNSSSDEGADDKNQFDCDYRGHKKYKNRRGSASSQNESSKERKLRDTELDYVPVRPDEHFIRPIKFSNLIERRPPQVEFNTVNLSKADKRSLAVARAELVLEQIQQKANKEEPPEFHMVDTICKLPVNESFRNQDCFENPSPICNNMNVVYKFNSTPGTRIDLSKWGLETVPEATKRLLRLLGIDVARLKELQSTVKPSQRILKLKKEQLEQGLAPTEEQETATLYKNAATQTERRTATRDAGTQVRLESKLNGAFWQNPHFDPMNLTQHQSNVMLALQEIYQTLPSATMAVKLSRALAPALAIIKGRQP.

Positions 1–169 (MEAPMKLEVK…TLVPDEQQSF (169 aa)) are interaction with Piwi. 2 disordered regions span residues 52 to 75 (SDPE…LQPS) and 198 to 281 (TAEN…TELD). Positions 194-216 (MLEMTAENRKVKHKKKKHKKERS) form a coiled coil. Over residues 203–220 (KVKHKKKKHKKERSHRSN) the composition is skewed to basic residues. 2 stretches are compositionally biased toward basic and acidic residues: residues 241–251 (DDKNQFDCDYR) and 269–279 (SSKERKLRDTE). Residues 315–343 (LSKADKRSLAVARAELVLEQIQQKANKEE) are nxf2-interacting region (NIR). The stretch at 323 to 343 (LAVARAELVLEQIQQKANKEE) forms a coiled coil. A necessary for interaction with nxf2 and protein stability region spans residues 387–446 (TPGTRIDLSKWGLETVPEATKRLLRLLGIDVARLKELQSTVKPSQRILKLKKEQLEQGLA).

In terms of assembly, in the ovaries, part of a complex composed of at least Panx, nxf2, piwi and Nxt1. The complex is knowns as Panx-induced cotranscriptional silencing (PICTS) complex, Panx-nxf2-dependent TAP/p15 silencing (Pandas complex), SFiNX (silencing factor interacting nuclear export variant) or piwi-Panx-nxf2-p15 (PPNP) complex. Interacts (via NIR region) with nxf2 (via TAP-C domain); the interaction is direct. In terms of tissue distribution, expressed in female gonads (at protein level).

The protein localises to the nucleus. Its function is as follows. Acts via the piwi-interacting RNA (piRNA) pathway which mediates the repression of transposable elements during meiosis by forming complexes composed of piRNAs and piwi proteins and governs the methylation and subsequent repression of transposons. Required for transcriptional silencing of transposons targeted by piwi and confers its effects by interacting with nascent RNA transcripts. Likely to be recruited to nascent transcripts cotranscriptionally by piwi and to recruit additional factors involved in transcriptional silencing. In the ovaries, forms a complex with nxf2, piwi and Nxt1 which acts as effectors of cotranscriptional transposon silencing. The interaction with nxf2 stabilizes the nuclear protein complex. This chain is Protein panoramix, found in Drosophila melanogaster (Fruit fly).